A 154-amino-acid polypeptide reads, in one-letter code: Ribonuclease K6 (154 aa).

The N-terminal stretch at 1-27 (MGPHLLGRSSLLLLLLGMWWSVRPLCA) is a signal peptide. Residue His42 is the Proton acceptor of the active site. Intrachain disulfides connect Cys50–Cys108, Cys64–Cys118, Cys82–Cys133, and Cys89–Cys96. Asn59 carries N-linked (GlcNAc...) asparagine glycosylation. Residues 65-69 (KPENT) and Lys90 contribute to the substrate site. N-linked (GlcNAc...) asparagine glycosylation occurs at Asn104. Catalysis depends on His149, which acts as the Proton donor.

The protein belongs to the pancreatic ribonuclease family. In terms of assembly, interacts (via N-terminus) with bacterial lipopolysaccharide (LPS). In terms of tissue distribution, kidney (at protein level).

The protein resides in the secreted. The protein localises to the lysosome. It localises to the cytoplasmic granule. Functionally, ribonuclease which shows a preference for the pyrimidines uridine and cytosine. Has potent antimicrobial activity against a range of Gram-positive and Gram-negative bacteria, including P.aeruginosa, A.baumanii, M.luteus, S.aureus, E.faecalis, E.faecium, S.saprophyticus and E.coli. Causes loss of bacterial membrane integrity, and also promotes agglutination of Gram-negative bacteria. Probably contributes to urinary tract sterility. Bactericidal activity is independent of RNase activity. In Bos taurus (Bovine), this protein is Ribonuclease K6 (RNASE6).